The chain runs to 969 residues: Manganese resistance protein MNR2 (969 aa).

The span at 1-11 (MSTDNSQKDEG) shows a compositional bias: basic and acidic residues. 4 disordered regions span residues 1–49 (MSTD…SRRP), 96–153 (GAFI…DLSP), 167–186 (HKSF…NANN), and 199–256 (VNNN…NNSS). The Cytoplasmic segment spans residues 1–912 (MSTDNSQKDE…DMNDVLGKIT (912 aa)). Over residues 13–23 (PLLSPYSSSPQ) the composition is skewed to low complexity. Residues 24–36 (LRKKKRNQKRRKD) show a composition bias toward basic residues. Residues 37–48 (KFVGHLKSDSRR) show a composition bias toward basic and acidic residues. Position 114 is a phosphoserine (S114). The segment covering 141–152 (SDQNRSLVSDLS) has biased composition (polar residues). A Phosphoserine modification is found at S175. T177 carries the post-translational modification Phosphothreonine. S182 is subject to Phosphoserine. Composition is skewed to low complexity over residues 225–234 (NKNSKSTSSD) and 244–256 (SRPS…NNSS). Phosphoserine is present on S383. 2 disordered regions span residues 559–662 (VRRR…KPRE) and 746–769 (QSDD…DEDA). The segment covering 565–578 (EKQESATLDHESIS) has biased composition (basic and acidic residues). Residue T571 is modified to Phosphothreonine. A phosphoserine mark is found at S576 and S582. Low complexity-rich tracts occupy residues 590-607 (SNES…ASRS) and 622-632 (ANRTTNTSSSS). Residues 749–769 (DSSDSDSSDSDSDSGASDEDA) are compositionally biased toward acidic residues. A helical membrane pass occupies residues 913–933 (ILGTIVLPMNVITGLWGMNVI). Over 934–941 (VPGQYRDS) the chain is Extracellular. The chain crosses the membrane as a helical span at residues 942–962 (LTWFIGIVLFMCMLACSAYMY). At 963 to 969 (TKRRFGF) the chain is on the cytoplasmic side.

This sequence belongs to the CorA metal ion transporter (MIT) (TC 1.A.35) family.

It localises to the membrane. The polypeptide is Manganese resistance protein MNR2 (MNR2) (Saccharomyces cerevisiae (strain ATCC 204508 / S288c) (Baker's yeast)).